Consider the following 482-residue polypeptide: Capsule synthesis positive regulator AcpB (482 aa).

PRD domains follow at residues 165–270 (PFEK…YKDI) and 283–395 (EGNL…YTSN).

Belongs to the AtxA/AcpA family.

In terms of biological role, acpB and AcpA regulate cap gene expression and capsule synthesis. In Bacillus anthracis, this protein is Capsule synthesis positive regulator AcpB (acpB).